The following is a 193-amino-acid chain: PXMP2/4 family protein 2 (193 aa).

4 helical membrane passes run Val56 to Leu78, Ile96 to Ile116, Leu132 to Ser152, and Val160 to Asp180.

Belongs to the peroxisomal membrane protein PXMP2/4 family.

The protein localises to the membrane. The protein is PXMP2/4 family protein 2 of Dictyostelium discoideum (Social amoeba).